The chain runs to 465 residues: Tubulin gamma chain (465 aa).

144–150 (AGGTGSG) contacts GTP.

This sequence belongs to the tubulin family.

It is found in the cytoplasm. Its subcellular location is the cytoskeleton. The protein localises to the microtubule organizing center. It localises to the spindle pole body. Tubulin is the major constituent of microtubules. The gamma chain is found at microtubule organizing centers (MTOC) such as the spindle poles or the centrosome, suggesting that it is involved in the minus-end nucleation of microtubule assembly. In Candida glabrata (strain ATCC 2001 / BCRC 20586 / JCM 3761 / NBRC 0622 / NRRL Y-65 / CBS 138) (Yeast), this protein is Tubulin gamma chain (TUB4).